A 338-amino-acid polypeptide reads, in one-letter code: Putative peptide import ATP-binding protein BOV_A0348 (338 aa).

The ABC transporter domain occupies 10 to 263 (KGLRTVFRTR…PRHPYTMGLL (254 aa)). 43–50 (GESGSGKS) is an ATP binding site.

It belongs to the ABC transporter superfamily. As to quaternary structure, the complex is composed of two ATP-binding proteins (BOV_A0347 and BOV_A0348), two transmembrane proteins (BOV_A0350 and BOV_A0351) and a solute-binding protein (BOV_A0352).

Its subcellular location is the cell inner membrane. Probably part of an ABC transporter complex that could be involved in peptide import. Probably responsible for energy coupling to the transport system. The polypeptide is Putative peptide import ATP-binding protein BOV_A0348 (Brucella ovis (strain ATCC 25840 / 63/290 / NCTC 10512)).